We begin with the raw amino-acid sequence, 294 residues long: Nucleotide-binding protein DICTH_1001 (294 aa).

An ATP-binding site is contributed by 10–17 (GLSGAGKS). 61-64 (DIRT) serves as a coordination point for GTP.

Belongs to the RapZ-like family.

Its function is as follows. Displays ATPase and GTPase activities. The polypeptide is Nucleotide-binding protein DICTH_1001 (Dictyoglomus thermophilum (strain ATCC 35947 / DSM 3960 / H-6-12)).